The primary structure comprises 800 residues: N,N'-diacetylchitobiose phosphorylase (800 aa).

Positions 333, 343, 349, 350, 490, and 492 each coordinate N-acetyl-alpha-D-glucosamine 1-phosphate. Asp492 acts as the Proton donor in catalysis. 3 residues coordinate N-acetyl-D-glucosamine: Asp492, Lys636, and Glu637. The N-acetyl-alpha-D-glucosamine 1-phosphate site is built by Glu637, His644, Gln690, Thr709, and Gly710.

It belongs to the glycosyl hydrolase 94 family. Homodimer.

It catalyses the reaction N,N'-diacetylchitobiose + phosphate = N-acetyl-alpha-D-glucosamine 1-phosphate + N-acetyl-D-glucosamine. In terms of biological role, catalyzes the reversible phosphorolysis of chitobiose (N,N'-diacetylchitobiose or (GlcNAc)(2)) into N-acetyl-alpha-D-glucosamine 1-phosphate (GlcNAc-1-P) and N-acetyl-D-glucosamine (GlcNAc) with inversion of the anomeric configuration. The protein is N,N'-diacetylchitobiose phosphorylase of Vibrio furnissii.